We begin with the raw amino-acid sequence, 219 residues long: Ras-related protein Rab-32A (219 aa).

Residue 22-29 (GDIGTGKT) participates in GTP binding. Positions 44–52 (YKSTIGVDF) match the Effector region motif. Residues 71–75 (DIAGQ) and 134–137 (NKCD) each bind GTP. Residues 192–219 (NQPIEGTIQPGDLNKQPQPTSTGPSCCK) form a disordered region. Positions 206–219 (KQPQPTSTGPSCCK) are enriched in polar residues. 2 S-geranylgeranyl cysteine lipidation sites follow: cysteine 217 and cysteine 218.

It belongs to the small GTPase superfamily. Rab family.

This is Ras-related protein Rab-32A (rab32A) from Dictyostelium discoideum (Social amoeba).